The chain runs to 397 residues: Phosphoglycerate kinase (397 aa).

Substrate contacts are provided by residues 25 to 27, R41, 64 to 67, R118, and R151; these read DLN and HLGR. ATP contacts are provided by residues K202, E324, and 350–353; that span reads GGDT.

The protein belongs to the phosphoglycerate kinase family. As to quaternary structure, monomer.

Its subcellular location is the cytoplasm. It carries out the reaction (2R)-3-phosphoglycerate + ATP = (2R)-3-phospho-glyceroyl phosphate + ADP. The protein operates within carbohydrate degradation; glycolysis; pyruvate from D-glyceraldehyde 3-phosphate: step 2/5. This Albidiferax ferrireducens (strain ATCC BAA-621 / DSM 15236 / T118) (Rhodoferax ferrireducens) protein is Phosphoglycerate kinase.